Reading from the N-terminus, the 150-residue chain is Large ribosomal subunit protein bL9 (150 aa).

This sequence belongs to the bacterial ribosomal protein bL9 family.

Binds to the 23S rRNA. In Burkholderia pseudomallei (strain 668), this protein is Large ribosomal subunit protein bL9.